The sequence spans 468 residues: MEKNMIGKISQVMGPVVDVDFDGYLPIINEAIEVNINLEGTQTRLVLEVAAHLGDGRVRTIAMDMSEGLVRGMNATATGSPIKVPVGEKVLGRIFNVIGETIDDGEQVTDAPMWSIHRQPPALVEQSTTTEMFETGIKVVDLLAPYSKGGKVGLFGGAGVGKTVIIMELIHNVAMGHDGLSVFAGVGERTREGNDLYHEMKDSNVLDKVALCYGQMSEPPGARNRIALTGLTMAEYFRDEKGLDVLMFVDNIFRFAQSGSEMSALLGRIPSAVGYQPTLAREMGALQDRITSTKNGSITSVQAVYVPADDLTDPAPASVFAHLDATTVLNRKIAEKGIYPAVDPLDSSSRLLDPQILGEEHYNVARGVQQTLQKYKDLQDIIAILGMDELSEDDKNIVERARKIEKFLSQPFFVAEVFTGSPGKYVSLADTIKGFKMILSGECDHMPEGSFYMVGGIDEAIEKAQKMK.

156-163 (GGAGVGKT) is a binding site for ATP.

This sequence belongs to the ATPase alpha/beta chains family. As to quaternary structure, F-type ATPases have 2 components, CF(1) - the catalytic core - and CF(0) - the membrane proton channel. CF(1) has five subunits: alpha(3), beta(3), gamma(1), delta(1), epsilon(1). CF(0) has three main subunits: a(1), b(2) and c(9-12). The alpha and beta chains form an alternating ring which encloses part of the gamma chain. CF(1) is attached to CF(0) by a central stalk formed by the gamma and epsilon chains, while a peripheral stalk is formed by the delta and b chains.

It localises to the cell inner membrane. It catalyses the reaction ATP + H2O + 4 H(+)(in) = ADP + phosphate + 5 H(+)(out). Functionally, produces ATP from ADP in the presence of a proton gradient across the membrane. The catalytic sites are hosted primarily by the beta subunits. The sequence is that of ATP synthase subunit beta from Sulfurimonas denitrificans (strain ATCC 33889 / DSM 1251) (Thiomicrospira denitrificans (strain ATCC 33889 / DSM 1251)).